A 434-amino-acid polypeptide reads, in one-letter code: Calcium uptake protein 2, mitochondrial (434 aa).

The N-terminal 22 residues, 1–22, are a transit peptide targeting the mitochondrion; the sequence is MAAAAGSCARVAAWGGKLRRGL. The region spanning 172–207 is the EF-hand 1 domain; that stretch reads KPHSGFHVAFKMLDTDGNEMIEKREFFKLQKIISKQ. Positions 185, 187, 189, 191, 193, and 196 each coordinate Ca(2+). Position 205 is a phosphoserine (S205). The EF-hand 2; degenerate domain occupies 227–262; sequence EPEINTTLQMRFFGKRGQRKLHYKEFRRFMENLQTE. The EF-hand 3; degenerate domain maps to 293 to 328; sequence TENKDIYWKNVREKLSAGESISLDEFKSFCHFTTHL. Residues 362-397 form the EF-hand 4 domain; the sequence is LSNNILDTVFKIFDLDGDECLSHEEFLGVLKNRMHR. Residues D375, D377, D379, C381, and E386 each coordinate Ca(2+).

It belongs to the MICU1 family. MICU2 subfamily. As to quaternary structure, heterodimer; disulfide-linked; heterodimerizes with MICU1. Component of the uniplex complex, composed of MCU, EMRE/SMDT1, MICU1 and MICU2 in a 4:4:1:1 stoichiometry.

It localises to the mitochondrion intermembrane space. The protein localises to the mitochondrion inner membrane. Functionally, calcium sensor of the mitochondrial calcium uniporter (MCU) channel, which senses calcium level via its EF-hand domains. MICU1 and MICU2 form a disulfide-linked heterodimer that stimulates and inhibits MCU activity, depending on the concentration of calcium. At low calcium levels, MICU1 occludes the pore of the MCU channel, preventing mitochondrial calcium uptake. At higher calcium levels, calcium-binding to MICU1 and MICU2 induces a conformational change that weakens MCU-MICU1 interactions and moves the MICU1-MICU2 heterodimer away from the pore, allowing calcium permeation through the MCU channel. The polypeptide is Calcium uptake protein 2, mitochondrial (Homo sapiens (Human)).